The primary structure comprises 185 residues: Uroplakin-2 (185 aa).

A signal peptide spans 1 to 26; that stretch reads MASPWPVWTLSWILILLAVLVPGAAA. The propeptide occupies 27 to 85; the sequence is DFNISSLSGLLSPVMTESLLVALPPCHLTGGNATLTVRRANDSKVVRSSFVVPPCRGRR. Residues Asn29, Asn58, and Asn67 are each glycosylated (N-linked (GlcNAc...) asparagine). Residues 86–156 are Lumenal-facing; that stretch reads ELVSVVDSGS…IGLAMARTGG (71 aa). The chain crosses the membrane as a helical span at residues 157 to 177; the sequence is MVVITVLLSVAMFLLVLGLII. Topologically, residues 178–185 are cytoplasmic; it reads ALALGARK.

It belongs to the uroplakin-2 family. Interacts with uroplakin-1a (UPK1A). In terms of tissue distribution, bladder epithelium.

The protein localises to the cell membrane. Functionally, component of the asymmetric unit membrane (AUM); a highly specialized biomembrane elaborated by terminally differentiated urothelial cells. May play an important role in regulating the assembly of the AUM. The polypeptide is Uroplakin-2 (UPK2) (Bos taurus (Bovine)).